The sequence spans 403 residues: Argininosuccinate synthase (403 aa).

ATP is bound by residues 12–20 and Ala39; that span reads AYSGGLDTS. L-citrulline-binding residues include Tyr90 and Ser95. ATP is bound at residue Gly120. L-aspartate is bound by residues Thr122, Asn126, and Asp127. L-citrulline is bound at residue Asn126. L-citrulline contacts are provided by Arg130, Ser182, Ser191, Glu267, and Tyr279.

The protein belongs to the argininosuccinate synthase family. Type 1 subfamily. In terms of assembly, homotetramer.

It localises to the cytoplasm. It carries out the reaction L-citrulline + L-aspartate + ATP = 2-(N(omega)-L-arginino)succinate + AMP + diphosphate + H(+). Its pathway is amino-acid biosynthesis; L-arginine biosynthesis; L-arginine from L-ornithine and carbamoyl phosphate: step 2/3. This Vesicomyosocius okutanii subsp. Calyptogena okutanii (strain HA) protein is Argininosuccinate synthase.